The sequence spans 600 residues: Prostaglandin G/H synthase 1 (600 aa).

The first 24 residues, 1–24, serve as a signal peptide directing secretion; sequence MSRQSISLRFPLLLLLLSPSPVFS. Residues 32–70 enclose the EGF-like domain; sequence PVNPCCYYPCQHQGICVRFGLDRYQCDCTRTGYSGPNCT. Cystine bridges form between C36/C47, C37/C159, C41/C57, and C59/C69. N68 carries an N-linked (GlcNAc...) asparagine glycan. Helical transmembrane passes span 74–82, 86–92, 97–105, and 108–122; these read IWTWLRTTL, PSFIHFL, RWLWDFVNA, and IRDT…VRSN. N-linked (GlcNAc...) asparagine glycosylation is present at N144. The active-site Proton acceptor is H207. The For cyclooxygenase activity role is filled by Y385. H388 provides a ligand contact to heme b. Residue N410 is glycosylated (N-linked (GlcNAc...) asparagine). An intrachain disulfide couples C569 to C575.

This sequence belongs to the prostaglandin G/H synthase family. In terms of assembly, homodimer. Heme b is required as a cofactor.

The protein localises to the endoplasmic reticulum membrane. It is found in the microsome membrane. It carries out the reaction (5Z,8Z,11Z,14Z)-eicosatetraenoate + AH2 + 2 O2 = prostaglandin H2 + A + H2O. The enzyme catalyses (5Z,8Z,11Z,14Z)-eicosatetraenoate + 2 O2 = prostaglandin G2. It catalyses the reaction prostaglandin G2 + AH2 = prostaglandin H2 + A + H2O. The catalysed reaction is (9Z,12Z)-octadecadienoate + AH2 + O2 = (9R)-hydroxy-(10E,12Z)-octadecadienoate + A + H2O. It carries out the reaction (9Z,12Z)-octadecadienoate + AH2 + O2 = (9S)-hydroxy-(10E,12Z)-octadecadienoate + A + H2O. The enzyme catalyses (9Z,12Z)-octadecadienoate + AH2 + O2 = (13S)-hydroxy-(9Z,11E)-octadecadienoate + A + H2O. It catalyses the reaction (9Z,12Z)-octadecadienoate + AH2 + O2 = (13R)-hydroxy-(9Z,11E)-octadecadienoate + A + H2O. Its pathway is lipid metabolism; prostaglandin biosynthesis. The cyclooxygenase activity is inhibited by nonsteroidal anti-inflammatory drugs (NSAIDs) including ibuprofen, flurbiprofen, ketoprofen, naproxen, flurbiprofen, anirolac, fenclofenac and diclofenac. Functionally, dual cyclooxygenase and peroxidase that plays an important role in the biosynthesis pathway of prostanoids, a class of C20 oxylipins mainly derived from arachidonate ((5Z,8Z,11Z,14Z)-eicosatetraenoate, AA, C20:4(n-6)), with a particular role in the inflammatory response. The cyclooxygenase activity oxygenates AA to the hydroperoxy endoperoxide prostaglandin G2 (PGG2), and the peroxidase activity reduces PGG2 to the hydroxy endoperoxide prostaglandin H2 (PGH2), the precursor of all 2-series prostaglandins and thromboxanes. This complex transformation is initiated by abstraction of hydrogen at carbon 13 (with S-stereochemistry), followed by insertion of molecular O2 to form the endoperoxide bridge between carbon 9 and 11 that defines prostaglandins. The insertion of a second molecule of O2 (bis-oxygenase activity) yields a hydroperoxy group in PGG2 that is then reduced to PGH2 by two electrons. Involved in the constitutive production of prostanoids in particular in the stomach and platelets. In gastric epithelial cells, it is a key step in the generation of prostaglandins, such as prostaglandin E2 (PGE2), which plays an important role in cytoprotection. In platelets, it is involved in the generation of thromboxane A2 (TXA2), which promotes platelet activation and aggregation, vasoconstriction and proliferation of vascular smooth muscle cells. Can also use linoleate (LA, (9Z,12Z)-octadecadienoate, C18:2(n-6)) as substrate and produce hydroxyoctadecadienoates (HODEs) in a regio- and stereospecific manner, being (9R)-HODE ((9R)-hydroxy-(10E,12Z)-octadecadienoate) and (13S)-HODE ((13S)-hydroxy-(9Z,11E)-octadecadienoate) its major products. This chain is Prostaglandin G/H synthase 1 (PTGS1), found in Ovis aries (Sheep).